Consider the following 233-residue polypeptide: Glucosamine-6-phosphate deaminase (233 aa).

Residue Asp62 is the Proton acceptor; for enolization step of the active site. Residue Asn128 is the For ring-opening step of the active site. His130 acts as the Proton acceptor; for ring-opening step in catalysis. Glu135 functions as the For ring-opening step in the catalytic mechanism.

This sequence belongs to the glucosamine/galactosamine-6-phosphate isomerase family. NagB subfamily.

The catalysed reaction is alpha-D-glucosamine 6-phosphate + H2O = beta-D-fructose 6-phosphate + NH4(+). It functions in the pathway amino-sugar metabolism; N-acetylneuraminate degradation; D-fructose 6-phosphate from N-acetylneuraminate: step 5/5. Functionally, catalyzes the reversible isomerization-deamination of glucosamine 6-phosphate (GlcN6P) to form fructose 6-phosphate (Fru6P) and ammonium ion. This chain is Glucosamine-6-phosphate deaminase, found in Streptococcus pneumoniae serotype 4 (strain ATCC BAA-334 / TIGR4).